Here is a 275-residue protein sequence, read N- to C-terminus: Large ribosomal subunit protein uL2c (275 aa).

Positions 219-255 (TVRGSVMNPCDHPHGGGEGRAPIGRTRPLTPWGKPAL) are disordered.

It belongs to the universal ribosomal protein uL2 family. Part of the 50S ribosomal subunit.

It is found in the plastid. The protein resides in the chloroplast. This Trieres chinensis (Marine centric diatom) protein is Large ribosomal subunit protein uL2c (rpl2).